We begin with the raw amino-acid sequence, 20 residues long: Chemoheterotroph-specific protein (20 aa).

The polypeptide is Chemoheterotroph-specific protein (Thiomonas delicata (Thiomonas cuprina)).